Reading from the N-terminus, the 1433-residue chain is CAP-Gly domain-containing linker protein 1 (1433 aa).

The interval 1-51 is disordered; it reads MSMLKPSGLKAPSKTIKHGSTLLKAPASVATAPAEKAPSSEKSSSTTTADA. Over residues 32-49 the composition is skewed to low complexity; that stretch reads APAEKAPSSEKSSSTTTA. The 43-residue stretch at 79-121 folds into the CAP-Gly 1 domain; it reads GETQFAPGQWAGIVLDEPIGKNDGSVAGVRYFQCEPLRGIFTR. The tract at residues 133–208 is disordered; that stretch reads DEANGTQTAH…VSNLSEAGSL (76 aa). The segment covering 140–168 has biased composition (low complexity); it reads TAHASRATSPTSTSTASAVSASPAALLPS. Over residues 184 to 204 the composition is skewed to polar residues; the sequence is TPSQFSNLSKTASGSVSNLSE. One can recognise a CAP-Gly 2 domain in the interval 235-277; sequence GETDFAKGEWCGVELDEPLGKNDGAVAGTRYFQCQPRYGLFAP. Residues 319–333 are compositionally biased toward low complexity; the sequence is SLSSVASSVSSKPSR. A disordered region spans residues 319 to 338; it reads SLSSVASSVSSKPSRTGLLT. The stretch at 351–1353 forms a coiled coil; sequence TTALQEALKE…CEAALNGNEE (1003 aa). Residues 1412-1429 form a CCHC-type zinc finger; it reads PYCDTCEMFGHWTADCND.

The protein resides in the cytoplasm. Its subcellular location is the cytoskeleton. It localises to the cytoplasmic vesicle membrane. The protein localises to the cell projection. It is found in the ruffle. Functionally, binds to the plus end of microtubules and regulates the dynamics of the microtubule cytoskeleton. Promotes microtubule growth and microtubule bundling. Links cytoplasmic vesicles to microtubules and thereby plays an important role in intracellular vesicle trafficking. Plays a role macropinocytosis and endosome trafficking. This chain is CAP-Gly domain-containing linker protein 1 (CLIP1), found in Gallus gallus (Chicken).